A 111-amino-acid chain; its full sequence is Prothymosin alpha (111 aa).

Met1 carries the N-acetylmethionine modification. Positions 1–111 (MSDAAVDTSS…TKKQKTDEDD (111 aa)) are disordered. Residue Ser2 is modified to N-acetylserine; in Prothymosin alpha, N-terminally processed. Ser2 carries the phosphoserine modification. The residue at position 8 (Thr8) is a Phosphothreonine. Ser9 and Ser10 each carry phosphoserine. Residues Thr13 and Thr14 each carry the phosphothreonine modification. Residues 13 to 31 (TTKDLKEKKEVVEEAENGR) are compositionally biased toward basic and acidic residues. At Lys15 the chain carries N6-acetyllysine; alternate. Residue Lys15 is modified to N6-succinyllysine; alternate. Residues 40-84 (ENEENGEQEADNEVDEEEEEGGEEEEEEEEGDGEEEDGDEDEEAE) are compositionally biased toward acidic residues. Residues 101-111 (DTKKQKTDEDD) are compositionally biased toward basic and acidic residues. Thr102 carries the phosphothreonine modification. Lys103 is subject to N6-acetyllysine; alternate. A Glycyl lysine isopeptide (Lys-Gly) (interchain with G-Cter in SUMO2); alternate cross-link involves residue Lys103. Thr107 bears the Phosphothreonine mark.

Belongs to the pro/parathymosin family. In terms of assembly, interacts with NUPR1; regulates apoptotic process. Covalently linked to a small RNA of about 20 nucleotides.

It is found in the nucleus. Its function is as follows. Prothymosin alpha may mediate immune function by conferring resistance to certain opportunistic infections. In Homo sapiens (Human), this protein is Prothymosin alpha (PTMA).